The sequence spans 247 residues: Centromere protein H (247 aa).

N-acetylmethionine is present on methionine 1. The span at 1-14 (MEEQPQMQDADEPA) shows a compositional bias: acidic residues. A disordered region spans residues 1-34 (MEEQPQMQDADEPADSGGEGRAGGPPQVAGAQAA). Serine 16 carries the phosphoserine modification. Residues 24–34 (GPPQVAGAQAA) are compositionally biased toward low complexity. Residues 47–192 (RAQTKQQLLE…KIDLDSMENS (146 aa)) are a coiled coil. Lysine 67 participates in a covalent cross-link: Glycyl lysine isopeptide (Lys-Gly) (interchain with G-Cter in SUMO2). Threonine 68 is modified (phosphothreonine).

The protein belongs to the CENP-H/MCM16 family. Self-associates. Component of the CENPA-NAC complex, at least composed of CENPA, CENPC, CENPH, CENPM, CENPN, CENPT and CENPU. The CENPA-NAC complex interacts with the CENPA-CAD complex, composed of CENPI, CENPK, CENPL, CENPO, CENPP, CENPQ, CENPR and CENPS. Interacts directly with CENPK. Interacts with KIF2C and NDC80. Interacts with TRIM36.

It localises to the nucleus. It is found in the chromosome. The protein resides in the centromere. Its subcellular location is the kinetochore. Functionally, component of the CENPA-NAC (nucleosome-associated) complex, a complex that plays a central role in assembly of kinetochore proteins, mitotic progression and chromosome segregation. The CENPA-NAC complex recruits the CENPA-CAD (nucleosome distal) complex and may be involved in incorporation of newly synthesized CENPA into centromeres. Required for chromosome congression and efficiently align the chromosomes on a metaphase plate. This Homo sapiens (Human) protein is Centromere protein H.